The primary structure comprises 457 residues: MCGVVGIYHPDGELAPRLAYYSLFSLQHRGQESAGIASFDNHIRQKRGMGLVTEVFNDEDFELLAGKSVIGHVRYSTTGRSRLENAQPFVVKSKAGYIAVAHNGNLVNYSQLRNELENEGRVFTTDSDTEVISQLLSKFLIEEGDIINALERLNESLVGSYTMTMLVDDAVIGYRDPLGFKPLCVGRIDDGYVICSESCAIDALGGEFIRDVQPGKAAIIKDGELEFVKIAKSERRAVCIFEYIYFARPDSIIDGISVYKARSEMGKVLARESPVEADFVSAVPDSGITAAIGYAQESGLPYFEGLIKNRYVGRTFIMPVQSLRETSVRLKVNVVRENVRGRRVVLVDDSIVRGTTSRRIVQMIKDAGAKEVHMRIGSPPIIAPCYFGIDMKSREELIAASHTVEEIGRIFGTDSLAYLSLEGLLEAVRRAGGKRGYCLACLTSKYPVSVPGEECEC.

Cysteine 2 serves as the catalytic Nucleophile. Residues 2-223 form the Glutamine amidotransferase type-2 domain; the sequence is CGVVGIYHPD…PGKAAIIKDG (222 aa). Cysteine 239 contacts [4Fe-4S] cluster. Mg(2+)-binding residues include serine 286, aspartate 348, and aspartate 349. Cysteine 385, cysteine 438, and cysteine 441 together coordinate [4Fe-4S] cluster.

This sequence in the C-terminal section; belongs to the purine/pyrimidine phosphoribosyltransferase family. It depends on Mg(2+) as a cofactor. [4Fe-4S] cluster is required as a cofactor.

It catalyses the reaction 5-phospho-beta-D-ribosylamine + L-glutamate + diphosphate = 5-phospho-alpha-D-ribose 1-diphosphate + L-glutamine + H2O. It participates in purine metabolism; IMP biosynthesis via de novo pathway; N(1)-(5-phospho-D-ribosyl)glycinamide from 5-phospho-alpha-D-ribose 1-diphosphate: step 1/2. In terms of biological role, catalyzes the formation of phosphoribosylamine from phosphoribosylpyrophosphate (PRPP) and glutamine. The chain is Amidophosphoribosyltransferase from Archaeoglobus fulgidus (strain ATCC 49558 / DSM 4304 / JCM 9628 / NBRC 100126 / VC-16).